A 258-amino-acid polypeptide reads, in one-letter code: MSLIDPRAIIDPTAVLADDVEVGPWSIVGAGVEIGEGTVIGPHVILKGPTRIGKHNRIYQFSSVGEDTPDLKYKGEETRLVIGDHNVIREGVTIHRGTVQDRSETTLGDHNLVMAYAHIGHDSVIGNHCILVNNTALAGHVHVDDWAILSGFTLVHQYCHIGAHSFSGMGTAIGKDVPAFVTVFGNPAEARSMNFEGMRRRGFSEDAIHALRRAYKTVYRQGLTVDQALAELAEPAAQFPEVAVFRDSIQSSTRGITR.

Belongs to the transferase hexapeptide repeat family. LpxA subfamily. Homotrimer.

It localises to the cytoplasm. The enzyme catalyses a (3R)-hydroxyacyl-[ACP] + UDP-N-acetyl-alpha-D-glucosamine = a UDP-3-O-[(3R)-3-hydroxyacyl]-N-acetyl-alpha-D-glucosamine + holo-[ACP]. Its pathway is glycolipid biosynthesis; lipid IV(A) biosynthesis; lipid IV(A) from (3R)-3-hydroxytetradecanoyl-[acyl-carrier-protein] and UDP-N-acetyl-alpha-D-glucosamine: step 1/6. Its function is as follows. Involved in the biosynthesis of lipid A, a phosphorylated glycolipid that anchors the lipopolysaccharide to the outer membrane of the cell. The protein is Acyl-[acyl-carrier-protein]--UDP-N-acetylglucosamine O-acyltransferase of Pseudomonas fluorescens (strain ATCC BAA-477 / NRRL B-23932 / Pf-5).